The sequence spans 119 residues: DNA-binding protein inhibitor ID-3 (119 aa).

One can recognise a bHLH domain in the interval 28-80 (RGKGPAAEEPLSLLDDMNHCYSRLRELVPGVPRGTQLSQVEILQRVIDYILDL).

In terms of assembly, homodimer, and heterodimer with other HLH proteins. Interacts with COPS5 and COPS7A. Interacts with IFI204. Interacts with GATA4 and NKX2-5. Interacts with ANKRD2; both proteins cooperate in myoblast differentiation. Interacts with CLOCK and BMAL1. Expressed abundantly in lung, kidney and adrenal gland, but not in adult brain.

The protein resides in the nucleus. Functionally, transcriptional regulator (lacking a basic DNA binding domain) which negatively regulates the basic helix-loop-helix (bHLH) transcription factors by forming heterodimers and inhibiting their DNA binding and transcriptional activity. Implicated in regulating a variety of cellular processes, including cellular growth, senescence, differentiation, apoptosis, angiogenesis, and neoplastic transformation. Involved in myogenesis by inhibiting skeletal muscle and cardiac myocyte differentiation and promoting muscle precursor cells proliferation. Inhibits the binding of E2A-containing protein complexes to muscle creatine kinase E-box enhancer. Regulates the circadian clock by repressing the transcriptional activator activity of the CLOCK-BMAL1 heterodimer. The chain is DNA-binding protein inhibitor ID-3 (ID3) from Homo sapiens (Human).